The following is a 326-amino-acid chain: Tetraacyldisaccharide 4'-kinase (326 aa).

58 to 65 (SVGGNGKT) lines the ATP pocket.

It belongs to the LpxK family.

The catalysed reaction is a lipid A disaccharide + ATP = a lipid IVA + ADP + H(+). Its pathway is glycolipid biosynthesis; lipid IV(A) biosynthesis; lipid IV(A) from (3R)-3-hydroxytetradecanoyl-[acyl-carrier-protein] and UDP-N-acetyl-alpha-D-glucosamine: step 6/6. In terms of biological role, transfers the gamma-phosphate of ATP to the 4'-position of a tetraacyldisaccharide 1-phosphate intermediate (termed DS-1-P) to form tetraacyldisaccharide 1,4'-bis-phosphate (lipid IVA). This is Tetraacyldisaccharide 4'-kinase from Pseudoalteromonas translucida (strain TAC 125).